A 488-amino-acid polypeptide reads, in one-letter code: ATP synthase subunit beta (488 aa).

164–171 contributes to the ATP binding site; sequence GGAGVGKT.

This sequence belongs to the ATPase alpha/beta chains family. In terms of assembly, F-type ATPases have 2 components, CF(1) - the catalytic core - and CF(0) - the membrane proton channel. CF(1) has five subunits: alpha(3), beta(3), gamma(1), delta(1), epsilon(1). CF(0) has four main subunits: a(1), b(1), b'(1) and c(9-12).

The protein resides in the cellular thylakoid membrane. It carries out the reaction ATP + H2O + 4 H(+)(in) = ADP + phosphate + 5 H(+)(out). Functionally, produces ATP from ADP in the presence of a proton gradient across the membrane. The catalytic sites are hosted primarily by the beta subunits. The polypeptide is ATP synthase subunit beta (Prochlorococcus marinus (strain SARG / CCMP1375 / SS120)).